The chain runs to 223 residues: RNA polymerase sigma-H factor (223 aa).

The Polymerase core binding signature appears at 67–80; the sequence is DIVQEGMIGLYKSI. Residues 187 to 206 constitute a DNA-binding region (H-T-H motif); that stretch reads YQEISEELNRHVKSIDNALQ.

Belongs to the sigma-70 factor family.

Its function is as follows. Sigma factors are initiation factors that promote the attachment of RNA polymerase to specific initiation sites and are then released. This sigma factor is involved in the transition to post-exponential phase in the beginning of sporulation. The sequence is that of RNA polymerase sigma-H factor (sigH) from Bacillus licheniformis.